Reading from the N-terminus, the 86-residue chain is uncharacterized protein (86 aa).

This is an uncharacterized protein from Haemophilus influenzae (strain ATCC 51907 / DSM 11121 / KW20 / Rd).